The following is a 237-amino-acid chain: MNEEMSGESPENNKHVKKPTMPEKIDYVFKVVVIGDSAVGKTQLLSRFTHNEFCYDSKSTIGVEFQTRTITLRGKLVKAQIWDTAGQERYRAVTSAYYRGALGAMVVYDITKRLSFDHVARWVEELRAHADDSAVIMLVGNKADLSVGKRAVPTEDAVEFAETQRLFFSEVSALSGGNVDEAFFRLLEEIFSRVVVSRKAMESDGGATVKLDGSRIDVISGSDLETSNIKEQASCSC.

GTP is bound at residue 35–42 (GDSAVGKT). Positions 57 to 65 (SKSTIGVEF) match the Effector region motif. GTP-binding positions include 83–87 (DTAGQ), 141–144 (NKAD), and 172–173 (SA). Residues C235 and C237 are each lipidated (S-geranylgeranyl cysteine). C237 carries the post-translational modification Cysteine methyl ester.

The protein belongs to the small GTPase superfamily. Rab family. Expressed in root tips.

It localises to the endosome membrane. Its subcellular location is the golgi apparatus. The protein localises to the trans-Golgi network membrane. Its function is as follows. Intracellular vesicle trafficking and protein transport. The protein is Ras-related protein RABA3 (RABA3) of Arabidopsis thaliana (Mouse-ear cress).